The primary structure comprises 499 residues: Glycerol kinase (499 aa).

Thr12 contacts ADP. The ATP site is built by Thr12, Thr13, and Ser14. A sn-glycerol 3-phosphate-binding site is contributed by Thr12. Arg16 contributes to the ADP binding site. 4 residues coordinate sn-glycerol 3-phosphate: Arg82, Glu83, Tyr134, and Asp243. Positions 82, 83, 134, 243, and 244 each coordinate glycerol. Residues Thr265 and Gly308 each coordinate ADP. ATP contacts are provided by Thr265, Gly308, Gln312, and Gly409. Residues Gly409 and Asn413 each contribute to the ADP site.

This sequence belongs to the FGGY kinase family. As to quaternary structure, homotetramer and homodimer (in equilibrium).

The enzyme catalyses glycerol + ATP = sn-glycerol 3-phosphate + ADP + H(+). It functions in the pathway polyol metabolism; glycerol degradation via glycerol kinase pathway; sn-glycerol 3-phosphate from glycerol: step 1/1. Its activity is regulated as follows. Activated by phosphorylation and inhibited by fructose 1,6-bisphosphate (FBP). Its function is as follows. Key enzyme in the regulation of glycerol uptake and metabolism. Catalyzes the phosphorylation of glycerol to yield sn-glycerol 3-phosphate. This Lachnoclostridium phytofermentans (strain ATCC 700394 / DSM 18823 / ISDg) (Clostridium phytofermentans) protein is Glycerol kinase.